The primary structure comprises 302 residues: UDP-N-acetylenolpyruvoylglucosamine reductase (302 aa).

The FAD-binding PCMH-type domain occupies 31-196 (KIGGPADVLA…LRAWISLERG (166 aa)). The active site involves R175. The active-site Proton donor is S225. E295 is an active-site residue.

It belongs to the MurB family. The cofactor is FAD.

Its subcellular location is the cytoplasm. It catalyses the reaction UDP-N-acetyl-alpha-D-muramate + NADP(+) = UDP-N-acetyl-3-O-(1-carboxyvinyl)-alpha-D-glucosamine + NADPH + H(+). It participates in cell wall biogenesis; peptidoglycan biosynthesis. Its function is as follows. Cell wall formation. This Caldanaerobacter subterraneus subsp. tengcongensis (strain DSM 15242 / JCM 11007 / NBRC 100824 / MB4) (Thermoanaerobacter tengcongensis) protein is UDP-N-acetylenolpyruvoylglucosamine reductase.